A 373-amino-acid chain; its full sequence is Probable leucine aminopeptidase 1 (373 aa).

The first 18 residues, 1–18 (MKLLSVLALSATATSVLG), serve as a signal peptide directing secretion. Residues histidine 176 and aspartate 195 each coordinate Zn(2+). An N-linked (GlcNAc...) asparagine glycan is attached at asparagine 196. 2 residues coordinate Zn(2+): glutamate 234 and aspartate 261. N-linked (GlcNAc...) asparagine glycosylation is present at asparagine 288. Cysteine 310 and cysteine 314 are joined by a disulfide. Histidine 343 contacts Zn(2+).

This sequence belongs to the peptidase M28 family. M28E subfamily. In terms of assembly, monomer. Zn(2+) is required as a cofactor.

It localises to the secreted. Functionally, extracellular aminopeptidase which contributes to pathogenicity. The chain is Probable leucine aminopeptidase 1 (LAP1) from Trichophyton verrucosum (strain HKI 0517).